Reading from the N-terminus, the 191-residue chain is Protein GrpE (191 aa).

A disordered region spans residues 1–49; sequence MSEEKQTAEQVEAAEQEEVTEQAEQAASQEQHEETAGQEEALQHQIDEL. Acidic residues predominate over residues 12-21; that stretch reads EAAEQEEVTE. The segment covering 30 to 49 has biased composition (basic and acidic residues); it reads EQHEETAGQEEALQHQIDEL.

The protein belongs to the GrpE family. Homodimer.

It is found in the cytoplasm. Its function is as follows. Participates actively in the response to hyperosmotic and heat shock by preventing the aggregation of stress-denatured proteins, in association with DnaK and GrpE. It is the nucleotide exchange factor for DnaK and may function as a thermosensor. Unfolded proteins bind initially to DnaJ; upon interaction with the DnaJ-bound protein, DnaK hydrolyzes its bound ATP, resulting in the formation of a stable complex. GrpE releases ADP from DnaK; ATP binding to DnaK triggers the release of the substrate protein, thus completing the reaction cycle. Several rounds of ATP-dependent interactions between DnaJ, DnaK and GrpE are required for fully efficient folding. This Bacillus velezensis (strain DSM 23117 / BGSC 10A6 / LMG 26770 / FZB42) (Bacillus amyloliquefaciens subsp. plantarum) protein is Protein GrpE.